A 200-amino-acid chain; its full sequence is Lipopolysaccharide core heptose(II)-phosphate phosphatase (200 aa).

A signal peptide spans 1-25; sequence MLAFCRSSLKSKKYFIILLALAAIA.

The protein belongs to the phosphoglycerate mutase family. Ais subfamily.

Its subcellular location is the periplasm. The protein operates within bacterial outer membrane biogenesis; lipopolysaccharide metabolism. In terms of biological role, catalyzes the dephosphorylation of heptose(II) of the outer membrane lipopolysaccharide core. The chain is Lipopolysaccharide core heptose(II)-phosphate phosphatase from Escherichia coli O6:K15:H31 (strain 536 / UPEC).